We begin with the raw amino-acid sequence, 546 residues long: Calcitonin receptor-like protein 1 (546 aa).

Residues 1–171 (MADATSPFNV…EVARNARKLE (171 aa)) lie on the Cytoplasmic side of the membrane. A helical membrane pass occupies residues 172 to 192 (FVGLGLSLVSLILAISIFSYF). Over 193–205 (RRLRVFRNLLHLH) the chain is Extracellular. A helical membrane pass occupies residues 206-226 (LMIAMLMVVILRLVLYIDLIF). Residues 227-251 (TGENGPHTNSAEGKTINTMPIVCEG) lie on the Cytoplasmic side of the membrane. A helical transmembrane segment spans residues 252–272 (MFFFLEYFKTVTFCWMFLEGI). Over 273-292 (YLNNQIVFGFFNSEPKLLPY) the chain is Extracellular. Residues 293–313 (FIAGYGIPLVHTMLWLLVVLI) form a helical membrane-spanning segment. Over 314 to 333 (KKDFKVERCLGSYYLEPEFW) the chain is Cytoplasmic. The chain crosses the membrane as a helical span at residues 334-354 (ILDGPRMAELVINLFFICNVI). The Extracellular segment spans residues 355 to 377 (RVLYSKVRESNNTSEAGLKKSVK). N-linked (GlcNAc...) asparagine glycosylation is found at asparagine 365 and asparagine 366. A helical transmembrane segment spans residues 378–398 (AAMMLLPLLGVPNIMQTIPFA). Topologically, residues 399 to 403 (PTRDN) are cytoplasmic. The helical transmembrane segment at 404–424 (IMVFAVWTYTASFTYMYQGLM) threads the bilayer. Topologically, residues 425-546 (VASIYCFTNK…EGSNRSTKSP (122 aa)) are extracellular. N-linked (GlcNAc...) asparagine glycosylation is found at asparagine 472 and asparagine 476. A disordered region spans residues 472–546 (NGTANASAPQ…EGSNRSTKSP (75 aa)). Residues 473-485 (GTANASAPQTNNA) show a composition bias toward polar residues. Basic and acidic residues predominate over residues 500 to 520 (KGSDDSTTKLMKDAVMEEEKN). Asparagine 540 carries an N-linked (GlcNAc...) asparagine glycan.

The protein belongs to the G-protein coupled receptor 2 family. In terms of tissue distribution, expression was observed in the mechanosensory neuron pairs PLM, ALM, FLP, OLQD, and OLQV, the chemosensory neurons PHA, PHB, RMEV, the ring motor neurons RMED, and the pharyngeal interneuron pair I1. Expression in sensory neurons PHA, PQR and URY are responsible for mate searching behavior. Expressed in AIY, RIM, RIA, and other neurons.

The protein localises to the cell membrane. Its function is as follows. G-protein coupled receptor for PDF neuropeptides. Plays a role in responses to environmental signals, including chemicals and touch, and in modulating locomotory behaviors. Capable of transducing signals via an adenylate cyclase acy-1 cAMP-dependent pathway. Required to regulate the sex-specific expression of TGFbeta-like daf-7 in the ASJ chemosensory neurons, perhaps acting via acy-1. Involved in modulating mate searching behavior independent of nutritional status. In the presence of food, plays a role in initiating and extending exploratory roaming behavior, perhaps acting in AIY, RIM, RIA, and other neurons, in opposition to 5-hydroxytryptamine (serotonin) signaling. Involved in mediating arousal from the sleep-like state called lethargus, which occurs during molting between larval and adult stages, in part by regulating touch sensitivity. May play a role in circadian rhythms of locomotor activity. Functionally, G-protein coupled receptor which is activated by neuropeptides PDF-1 and PDF-2. Probably acts through the G-alpha(s) type of G proteins to elevate cAMP levels. G-protein coupled receptor which is activated by neuropeptides PDF-1 and PDF-2; however, activation is lower compared to isoforms a and b. Probably inhibits cAMP levels through the G-alpha(i/o) type of G proteins. This is Calcitonin receptor-like protein 1 (pdfr-1) from Caenorhabditis elegans.